Reading from the N-terminus, the 212-residue chain is Ribonuclease HII (212 aa).

The 185-residue stretch at 28 to 212 folds into the RNase H type-2 domain; it reads SLIAGIDEVG…KSFAPVRQVF (185 aa). Residues D34, E35, and D127 each coordinate a divalent metal cation.

This sequence belongs to the RNase HII family. Requires Mn(2+) as cofactor. It depends on Mg(2+) as a cofactor.

It localises to the cytoplasm. It catalyses the reaction Endonucleolytic cleavage to 5'-phosphomonoester.. Endonuclease that specifically degrades the RNA of RNA-DNA hybrids. In Chlamydia abortus (strain DSM 27085 / S26/3) (Chlamydophila abortus), this protein is Ribonuclease HII.